Reading from the N-terminus, the 244-residue chain is Monothiol glutaredoxin-4 (244 aa).

The Thioredoxin domain maps to Ser2 to Gln106. The Glutaredoxin domain maps to Asn147–Asn244. Lys164 contacts glutathione. Cys172 provides a ligand contact to [2Fe-2S] cluster. Residues Arg201–Lys205 and Leu226–Asp227 contribute to the glutathione site.

The protein belongs to the glutaredoxin family. Monothiol subfamily. In terms of assembly, homodimer. Interacts with php4.

Its subcellular location is the cytoplasm. It is found in the nucleus. Its function is as follows. Monothiol glutaredoxin involved in the biogenesis of iron-sulfur clusters. Binds one iron-sulfur cluster per dimer. The iron-sulfur cluster is bound between subunits, and is complexed by a bound glutathione and a cysteine residue from each subunit. The sequence is that of Monothiol glutaredoxin-4 (grx4) from Schizosaccharomyces pombe (strain 972 / ATCC 24843) (Fission yeast).